A 103-amino-acid polypeptide reads, in one-letter code: MHVKKGDKVQVITGKDKGKQGVILVAFPKQNRVIVEGVNIVKKHSKPSQLNPQGGIITKEAPIHVSNVMILDPKTGEPTRVGFKVEDGKKVRIAKKSGELLDK.

This sequence belongs to the universal ribosomal protein uL24 family. Part of the 50S ribosomal subunit.

Functionally, one of two assembly initiator proteins, it binds directly to the 5'-end of the 23S rRNA, where it nucleates assembly of the 50S subunit. Its function is as follows. One of the proteins that surrounds the polypeptide exit tunnel on the outside of the subunit. The protein is Large ribosomal subunit protein uL24 of Bacillus anthracis (strain A0248).